The following is a 598-amino-acid chain: Insulin-like growth factor 2 mRNA-binding protein 1 (598 aa).

RRM domains lie at 2-75 (NKLY…HSVP) and 81-156 (RKLQ…YIPD). The interval 155-195 (PDENSEVDSQRGPDNGRRPGYGPRGTSRQMSPGSGIPSKHQ) is disordered. The segment covering 162–171 (DSQRGPDNGR) has biased composition (basic and acidic residues). Ser185 carries the post-translational modification Phosphoserine. 2 consecutive KH domains span residues 198 to 263 (DIPL…CRMI) and 279 to 346 (EVPL…EQEI). A Phosphotyrosine modification is found at Tyr399. KH domains lie at 407 to 472 (QETV…QGRI) and 489 to 555 (KLET…QRKI). The segment at 561 to 598 (QVKQQQKGGGMGTPQGPHPQGMTELGSPQGLAQEPRRK) is disordered. A phosphothreonine mark is found at Thr573 and Thr583. Residues 574 to 583 (PQGPHPQGMT) show a composition bias toward low complexity. A Phosphoserine modification is found at Ser587.

Belongs to the RRM IMP/VICKZ family. Component of the CRD-mediated complex.

The protein localises to the nucleus. Its subcellular location is the cytoplasm. The protein resides in the perinuclear region. It is found in the P-body. It localises to the stress granule. The protein localises to the cell projection. Its subcellular location is the growth cone. The protein resides in the filopodium. It is found in the lamellipodium. Functionally, RNA-binding factor that recruits target transcripts to cytoplasmic protein-RNA complexes (mRNPs). This transcript 'caging' into mRNPs allows mRNA transport and transient storage. It also modulates the rate and location at which target transcripts encounter the translational apparatus and shields them from endonuclease attacks or microRNA-mediated degradation. Preferentially binds to N6-methyladenosine (m6A)-containing mRNAs and increases their stability. Plays a direct role in the transport and translation of transcripts required for axonal regeneration in adult sensory neurons. Regulates localized beta-actin/ACTB mRNA translation in polarized cells, a crucial process for cell migration and neurite outgrowth. Promotes the directed movement of cells by fine-tuning intracellular signaling networks and enhances the velocity of cell migration. The polypeptide is Insulin-like growth factor 2 mRNA-binding protein 1 (igf2bp1) (Danio rerio (Zebrafish)).